We begin with the raw amino-acid sequence, 315 residues long: Acetyl-coenzyme A carboxylase carboxyl transferase subunit alpha (315 aa).

In terms of domain architecture, CoA carboxyltransferase C-terminal spans 39–292 (LEDKSAKLLR…GDALEQELNG (254 aa)).

It belongs to the AccA family. In terms of assembly, acetyl-CoA carboxylase is a heterohexamer composed of biotin carboxyl carrier protein (AccB), biotin carboxylase (AccC) and two subunits each of ACCase subunit alpha (AccA) and ACCase subunit beta (AccD).

The protein resides in the cytoplasm. It catalyses the reaction N(6)-carboxybiotinyl-L-lysyl-[protein] + acetyl-CoA = N(6)-biotinyl-L-lysyl-[protein] + malonyl-CoA. It functions in the pathway lipid metabolism; malonyl-CoA biosynthesis; malonyl-CoA from acetyl-CoA: step 1/1. Component of the acetyl coenzyme A carboxylase (ACC) complex. First, biotin carboxylase catalyzes the carboxylation of biotin on its carrier protein (BCCP) and then the CO(2) group is transferred by the carboxyltransferase to acetyl-CoA to form malonyl-CoA. The protein is Acetyl-coenzyme A carboxylase carboxyl transferase subunit alpha of Sphingopyxis alaskensis (strain DSM 13593 / LMG 18877 / RB2256) (Sphingomonas alaskensis).